Here is a 726-residue protein sequence, read N- to C-terminus: MAR-binding filament-like protein 1 (726 aa).

The N-terminal 41 residues, 1–41 (MGFLIGGSCFVPSVPLHSRFLSSPSSSSSSSPSSSQFGLLC), are a transit peptide targeting the chloroplast. The transit peptide at 42 to 95 (SSNVAKFKRRRPTLASLNQEDGYEYDVASAKRRAFLLVGISVLPFLQLRSPALA) directs the protein to the thylakoid. The Lumenal, thylakoid segment spans residues 96 to 124 (DERGNEIKTSKVDLETEVAVVSEGTSPNP). A helical membrane pass occupies residues 125–145 (FLALLNGLGIFSAGVLGALYA). Positions 144–691 (YALARQDTKA…KGEILRMRSQ (548 aa)) form a coiled coil. Over 146–726 (LARQDTKAAE…VRRRKSSTSS (581 aa)) the chain is Stromal. Positions 678-726 (LGSAKGEILRMRSQPDSVKAVNSTDNKEKSDNTVTVKKVVRRRKSSTSS) are disordered. The segment covering 691–701 (QPDSVKAVNST) has biased composition (polar residues). Residues 715–722 (KVVRRRKS) carry the Nuclear localization signal motif. Positions 715-726 (KVVRRRKSSTSS) are enriched in basic residues.

As to quaternary structure, interacts with PTST2; the interaction is essential for the initiation of starch granules biosynthesis in leaf chloroplasts, for the correct location of the process in the stromal spaces between the thylakoid membranes, and for the association of PTST2 with the thylakoid membranes. In terms of processing, predicted to be translocated into the thylakoid by the Tat system. The position of the transit peptide cleavages have not been experimentally proven.

It localises to the plastid. The protein localises to the chloroplast. The protein resides in the chloroplast thylakoid membrane. It is found in the chloroplast stroma. Its subcellular location is the chloroplast nucleoid. It localises to the nucleus. The protein localises to the nucleus matrix. DNA-binding protein required for the initiation of starch granules biosynthesis in leaf chloroplasts. Anchored to the thylakoid membranes with its C-terminus facing into the stroma where it is essential for localizing PTST2 and SS4 to the stromal spaces between the thylakoid membranes in order to begin starch granule formation. Associated with leaf chloroplastic nucleoids in vivo. Binds to various chloroplastic double-stranded DNA fragments without particular sequence specificity in vitro. May function at the interface between nucleoids and thylakoids possibly by anchoring nucleoids to the thylakoid membrane system in mature chloroplasts. Likely to participate in nuclear architecture by connecting chromatin with the nuclear matrix and potentially with the nuclear envelope. The polypeptide is MAR-binding filament-like protein 1 (Arabidopsis thaliana (Mouse-ear cress)).